A 105-amino-acid polypeptide reads, in one-letter code: Urease subunit beta (105 aa).

It belongs to the urease beta subunit family. In terms of assembly, heterotrimer of UreA (gamma), UreB (beta) and UreC (alpha) subunits. Three heterotrimers associate to form the active enzyme.

The protein localises to the cytoplasm. The catalysed reaction is urea + 2 H2O + H(+) = hydrogencarbonate + 2 NH4(+). Its pathway is nitrogen metabolism; urea degradation; CO(2) and NH(3) from urea (urease route): step 1/1. This is Urease subunit beta from Mycobacterium sp. (strain JLS).